The sequence spans 339 residues: Ketol-acid reductoisomerase (NADP(+)) (339 aa).

One can recognise a KARI N-terminal Rossmann domain in the interval 1 to 182 (MRVYYDRDAD…GGGRSGIIET (182 aa)). Residues 24-27 (YGSQ), Lys-48, Ser-51, Thr-53, and 83-86 (DELQ) contribute to the NADP(+) site. His-108 is a catalytic residue. Gly-134 is an NADP(+) binding site. Residues 183-328 (NFKEECETDL…AKLRAMMPWI (146 aa)) form the KARI C-terminal knotted domain. Mg(2+) contacts are provided by Asp-191, Glu-195, Glu-227, and Glu-231. Residue Ser-252 coordinates substrate.

The protein belongs to the ketol-acid reductoisomerase family. Mg(2+) is required as a cofactor.

The catalysed reaction is (2R)-2,3-dihydroxy-3-methylbutanoate + NADP(+) = (2S)-2-acetolactate + NADPH + H(+). The enzyme catalyses (2R,3R)-2,3-dihydroxy-3-methylpentanoate + NADP(+) = (S)-2-ethyl-2-hydroxy-3-oxobutanoate + NADPH + H(+). Its pathway is amino-acid biosynthesis; L-isoleucine biosynthesis; L-isoleucine from 2-oxobutanoate: step 2/4. The protein operates within amino-acid biosynthesis; L-valine biosynthesis; L-valine from pyruvate: step 2/4. In terms of biological role, involved in the biosynthesis of branched-chain amino acids (BCAA). Catalyzes an alkyl-migration followed by a ketol-acid reduction of (S)-2-acetolactate (S2AL) to yield (R)-2,3-dihydroxy-isovalerate. In the isomerase reaction, S2AL is rearranged via a Mg-dependent methyl migration to produce 3-hydroxy-3-methyl-2-ketobutyrate (HMKB). In the reductase reaction, this 2-ketoacid undergoes a metal-dependent reduction by NADPH to yield (R)-2,3-dihydroxy-isovalerate. The sequence is that of Ketol-acid reductoisomerase (NADP(+)) from Rhizobium meliloti (strain 1021) (Ensifer meliloti).